A 414-amino-acid chain; its full sequence is Serine/threonine transporter SstT (414 aa).

Helical transmembrane passes span 16-36 (GSLV…AWIS), 46-66 (LGTL…LMLV), 84-104 (ILFL…VFSF), 143-163 (ALLN…GFAL), 180-200 (AVTF…FGLV), 219-239 (LVVL…LLVF), 300-320 (MAGA…TLGV), and 332-352 (VVAS…LLLI).

This sequence belongs to the dicarboxylate/amino acid:cation symporter (DAACS) (TC 2.A.23) family.

It is found in the cell inner membrane. It carries out the reaction L-serine(in) + Na(+)(in) = L-serine(out) + Na(+)(out). The catalysed reaction is L-threonine(in) + Na(+)(in) = L-threonine(out) + Na(+)(out). Its function is as follows. Involved in the import of serine and threonine into the cell, with the concomitant import of sodium (symport system). The chain is Serine/threonine transporter SstT from Salmonella agona (strain SL483).